An 851-amino-acid chain; its full sequence is Periplasmic nitrate reductase (851 aa).

The tat-type signal signal peptide spans Met1–Ala29. One can recognise a 4Fe-4S Mo/W bis-MGD-type domain in the interval Val44–Asp100. [4Fe-4S] cluster contacts are provided by Cys51, Cys54, Cys58, and Cys86. Mo-bis(molybdopterin guanine dinucleotide)-binding positions include Lys88, Gln155, Asn180, Cys184, Trp217–Met224, Ser248–His252, and Gln267–Asp269. Residues Asp317–Thr338 are disordered. Mo-bis(molybdopterin guanine dinucleotide) contacts are provided by residues Met388, Gln392, Asn498, Ser524 to Asp525, Lys547, Asp574, and Thr741 to Thr750. Substrate is bound at residue Phe817. The Mo-bis(molybdopterin guanine dinucleotide) site is built by Asn825 and Lys842.

The protein belongs to the prokaryotic molybdopterin-containing oxidoreductase family. NasA/NapA/NarB subfamily. As to quaternary structure, component of the periplasmic nitrate reductase NapAB complex composed of NapA and NapB. It depends on [4Fe-4S] cluster as a cofactor. The cofactor is Mo-bis(molybdopterin guanine dinucleotide). Predicted to be exported by the Tat system. The position of the signal peptide cleavage has not been experimentally proven.

The protein localises to the periplasm. The catalysed reaction is 2 Fe(II)-[cytochrome] + nitrate + 2 H(+) = 2 Fe(III)-[cytochrome] + nitrite + H2O. Functionally, catalytic subunit of the periplasmic nitrate reductase complex NapAB. Receives electrons from NapB and catalyzes the reduction of nitrate to nitrite. The polypeptide is Periplasmic nitrate reductase (Leptothrix cholodnii (strain ATCC 51168 / LMG 8142 / SP-6) (Leptothrix discophora (strain SP-6))).